The chain runs to 125 residues: Large-conductance mechanosensitive channel (125 aa).

Helical transmembrane passes span 14 to 34 (VIDL…VQSL) and 67 to 87 (GSFL…FLIV).

This sequence belongs to the MscL family. In terms of assembly, homopentamer.

Its subcellular location is the cell membrane. In terms of biological role, channel that opens in response to stretch forces in the membrane lipid bilayer. May participate in the regulation of osmotic pressure changes within the cell. This Lactobacillus helveticus (strain DPC 4571) protein is Large-conductance mechanosensitive channel.